The sequence spans 920 residues: Phosphoenolpyruvate carboxylase (920 aa).

Active-site residues include H138 and K583.

The protein belongs to the PEPCase type 1 family. Mg(2+) serves as cofactor.

The enzyme catalyses oxaloacetate + phosphate = phosphoenolpyruvate + hydrogencarbonate. In terms of biological role, forms oxaloacetate, a four-carbon dicarboxylic acid source for the tricarboxylic acid cycle. In Streptococcus pyogenes serotype M3 (strain ATCC BAA-595 / MGAS315), this protein is Phosphoenolpyruvate carboxylase.